A 604-amino-acid chain; its full sequence is Glutamyl-tRNA(Gln) amidotransferase subunit B, mitochondrial (604 aa).

A mitochondrion-targeting transit peptide spans 1-48 (MIRQCLSRRGAYSRYRLAARGVELAEPFHHQSSRPQGRRNWSSSPRCS). A disordered region spans residues 28–57 (FHHQSSRPQGRRNWSSSPRCSLDIRTDTPR). The segment covering 33-46 (SRPQGRRNWSSSPR) has biased composition (polar residues).

The protein belongs to the GatB/GatE family. GatB subfamily. In terms of assembly, subunit of the heterotrimeric GatCAB amidotransferase (AdT) complex, composed of A, B and C subunits.

Its subcellular location is the mitochondrion. It carries out the reaction L-glutamyl-tRNA(Gln) + L-glutamine + ATP + H2O = L-glutaminyl-tRNA(Gln) + L-glutamate + ADP + phosphate + H(+). In terms of biological role, allows the formation of correctly charged Gln-tRNA(Gln) through the transamidation of misacylated Glu-tRNA(Gln) in the mitochondria. The reaction takes place in the presence of glutamine and ATP through an activated gamma-phospho-Glu-tRNA(Gln). The protein is Glutamyl-tRNA(Gln) amidotransferase subunit B, mitochondrial of Blastomyces gilchristii (strain SLH14081) (Blastomyces dermatitidis).